Reading from the N-terminus, the 210-residue chain is N-(5'-phosphoribosyl)anthranilate isomerase (210 aa).

It belongs to the TrpF family.

It carries out the reaction N-(5-phospho-beta-D-ribosyl)anthranilate = 1-(2-carboxyphenylamino)-1-deoxy-D-ribulose 5-phosphate. It participates in amino-acid biosynthesis; L-tryptophan biosynthesis; L-tryptophan from chorismate: step 3/5. In Pseudomonas fluorescens (strain ATCC BAA-477 / NRRL B-23932 / Pf-5), this protein is N-(5'-phosphoribosyl)anthranilate isomerase.